Reading from the N-terminus, the 198-residue chain is Recombination protein RecR (198 aa).

A C4-type zinc finger spans residues 57–72 (CAMCNTFTEHEVCETC). The 96-residue stretch at 80–175 (ALLCVVETPG…KVSRLARGVP (96 aa)) folds into the Toprim domain.

This sequence belongs to the RecR family.

Its function is as follows. May play a role in DNA repair. It seems to be involved in an RecBC-independent recombinational process of DNA repair. It may act with RecF and RecO. This Janthinobacterium sp. (strain Marseille) (Minibacterium massiliensis) protein is Recombination protein RecR.